Reading from the N-terminus, the 349-residue chain is tRNA N6-adenosine threonylcarbamoyltransferase (349 aa).

Residues His-113 and His-117 each contribute to the Fe cation site. Substrate-binding positions include 135–139 (LVSGG), Asp-169, Gly-182, Asp-186, and Asn-281. Asp-309 serves as a coordination point for Fe cation.

The protein belongs to the KAE1 / TsaD family. Fe(2+) is required as a cofactor.

It localises to the cytoplasm. It catalyses the reaction L-threonylcarbamoyladenylate + adenosine(37) in tRNA = N(6)-L-threonylcarbamoyladenosine(37) in tRNA + AMP + H(+). Its function is as follows. Required for the formation of a threonylcarbamoyl group on adenosine at position 37 (t(6)A37) in tRNAs that read codons beginning with adenine. Is involved in the transfer of the threonylcarbamoyl moiety of threonylcarbamoyl-AMP (TC-AMP) to the N6 group of A37, together with TsaE and TsaB. TsaD likely plays a direct catalytic role in this reaction. In Corynebacterium aurimucosum (strain ATCC 700975 / DSM 44827 / CIP 107346 / CN-1) (Corynebacterium nigricans), this protein is tRNA N6-adenosine threonylcarbamoyltransferase.